The primary structure comprises 223 residues: Icarapin (223 aa).

Residues 1–19 form the signal peptide; that stretch reads MKTLGVLFIAAWFIACTHS. Asn-126, Asn-142, Asn-168, and Asn-193 each carry an N-linked (GlcNAc...) asparagine glycan. A compositionally biased stretch (polar residues) spans 186-203; the sequence is LPTLIGKNETSTQSSRSV. Positions 186-223 are disordered; sequence LPTLIGKNETSTQSSRSVESVEDFDNEIPKNQGDVLTA.

In terms of tissue distribution, expressed by the venom duct.

The protein resides in the secreted. This Apis mellifera carnica (Carniolan honeybee) protein is Icarapin.